We begin with the raw amino-acid sequence, 549 residues long: Cytoplasmic trehalase (549 aa).

Substrate is bound by residues arginine 168, tryptophan 175 to aspartate 176, asparagine 212, arginine 221 to glutamine 223, arginine 292 to glutamate 294, and glycine 324. Active-site proton donor/acceptor residues include aspartate 326 and glutamate 509. Position 525 (glutamate 525) interacts with substrate.

It belongs to the glycosyl hydrolase 37 family. In terms of assembly, monomer.

It localises to the cytoplasm. It carries out the reaction alpha,alpha-trehalose + H2O = alpha-D-glucose + beta-D-glucose. The protein operates within glycan degradation; trehalose degradation; D-glucose from alpha,alpha-trehalose: step 1/1. Functionally, hydrolyzes trehalose to glucose. Could be involved, in cells returning to low osmolarity conditions, in the utilization of the accumulated cytoplasmic trehalose, which was synthesized in response to high osmolarity. The sequence is that of Cytoplasmic trehalase from Escherichia coli O127:H6 (strain E2348/69 / EPEC).